We begin with the raw amino-acid sequence, 180 residues long: ADP-ribosylation factor 1 (180 aa).

Gly2 carries the N-myristoyl glycine lipid modification. GTP-binding positions include 24 to 31 (GLDAAGKT), 67 to 71 (DVGGQ), and 126 to 129 (NKQD).

The protein belongs to the small GTPase superfamily. Arf family.

It localises to the golgi apparatus. It catalyses the reaction GTP + H2O = GDP + phosphate + H(+). In terms of biological role, GTP-binding protein involved in protein trafficking; may modulate vesicle budding and uncoating within the Golgi apparatus. The polypeptide is ADP-ribosylation factor 1 (arf1) (Schizosaccharomyces pombe (strain 972 / ATCC 24843) (Fission yeast)).